Consider the following 99-residue polypeptide: Cell cycle protein GpsB (99 aa).

Residues 34 to 71 (LDMIIKDYETFHQEIEELQQENLQLKKQLEEASKKQPV) are a coiled coil.

This sequence belongs to the GpsB family. As to quaternary structure, forms polymers through the coiled coil domains. Interacts with PBP1, MreC and EzrA.

Its subcellular location is the cytoplasm. Divisome component that associates with the complex late in its assembly, after the Z-ring is formed, and is dependent on DivIC and PBP2B for its recruitment to the divisome. Together with EzrA, is a key component of the system that regulates PBP1 localization during cell cycle progression. Its main role could be the removal of PBP1 from the cell pole after pole maturation is completed. Also contributes to the recruitment of PBP1 to the division complex. Not essential for septum formation. This Bacillus velezensis (strain DSM 23117 / BGSC 10A6 / LMG 26770 / FZB42) (Bacillus amyloliquefaciens subsp. plantarum) protein is Cell cycle protein GpsB.